Consider the following 124-residue polypeptide: Large-conductance mechanosensitive channel (124 aa).

Helical transmembrane passes span 14–34, 37–57, and 67–87; these read VIDL…VQSL, NLIN…NLVF, and GSFI…FLIV.

This sequence belongs to the MscL family. In terms of assembly, homopentamer.

It localises to the cell membrane. Functionally, channel that opens in response to stretch forces in the membrane lipid bilayer. May participate in the regulation of osmotic pressure changes within the cell. This is Large-conductance mechanosensitive channel from Lactobacillus acidophilus (strain ATCC 700396 / NCK56 / N2 / NCFM).